The chain runs to 144 residues: MRLNTLSPAEGSKKAGKRLGRGIGSGLGKTGGRGHKGQKSRSGGGVRRGFEGGQMPLYRRLPKFGFTSRKAAITAEIRLSDLAKVEGGVVDLNTLKAANIIGIQIEFAKVILAGEVTTPVTVRGLRVTKGARAAIEAAGGKIEE.

A disordered region spans residues 1 to 54 (MRLNTLSPAEGSKKAGKRLGRGIGSGLGKTGGRGHKGQKSRSGGGVRRGFEGGQ). Gly residues predominate over residues 21 to 31 (RGIGSGLGKTG).

It belongs to the universal ribosomal protein uL15 family. Part of the 50S ribosomal subunit.

Its function is as follows. Binds to the 23S rRNA. This Escherichia coli (strain K12 / MC4100 / BW2952) protein is Large ribosomal subunit protein uL15.